Here is a 119-residue protein sequence, read N- to C-terminus: uncharacterized protein (119 aa).

This is an uncharacterized protein from Bos taurus (Bovine).